Here is a 449-residue protein sequence, read N- to C-terminus: MFSLKSLISSPFTQSTTHGLFTNPITRPVNPLPRTVSFTVTASMIPKRSSANMIPKNPPARQQLYQPFRPPSSPIPTQFRSLDSAGKIEILAGRMALWFEYAPLISSLYTDGFTPPTIEELTGISSIEQNRLIVGAQVRDSILQSIHEPELISAFDTGGAELLYEIRLLSTTQRVAAATFIIDRNIDSKGAQDLARAIKDYPNRRGDVGWLDFDYNLPGDCLSFLYYRQSRENKNPSDQRTSMLLQALGVAESEKAKNRLNTELYGDKEAEKEKEKKKKEEEVKAIRIPVVRLKFGEVAEATSVVVLPVCKAEEGEKKILEAPMEIIAGGDFKVVEAEKGWKRWVVLPSWNPVAAIGKGGVAVSFRDDRKVLPWDGKEEPLLVVADRVRNVVEADDGYYLVVAENGLKLEKGSDLKAREVKESLGMVVLVVRPPREDDDDWQTSHQNWD.

Residues 1–61 constitute a chloroplast transit peptide; the sequence is MFSLKSLISS…NMIPKNPPAR (61 aa). The segment at 75 to 264 is N-terminal alpha-helix; that stretch reads IPTQFRSLDS…KAKNRLNTEL (190 aa). A coiled-coil region spans residues 262-288; that stretch reads TELYGDKEAEKEKEKKKKEEEVKAIRI. The interval 288-434 is C-terminal beta sheet; that stretch reads IPVVRLKFGE…GMVVLVVRPP (147 aa).

This sequence belongs to the RAF family. As to quaternary structure, homodimer.

It is found in the plastid. Its subcellular location is the chloroplast. Required for assembly or stability of RuBisCO. Acts at a postchaperonin step to fold and/or assemble the large subunit (rbcL) into RuBisCO. RAF1 brackets an rbcL dimer (rbcL(2)), leading to rbcL(8)-RAF1(4) complex formation. In the next step, RBCS displaces RAF1, thus resulting in holoenzyme formation. The protein is Rubisco accumulation factor 1.2, chloroplastic of Arabidopsis thaliana (Mouse-ear cress).